Here is a 287-residue protein sequence, read N- to C-terminus: Probable aquaporin PIP1-5 (287 aa).

Position 1 is an N-acetylmethionine (methionine 1). Residues 1-34 (MEGKEEDVNVGANKFPERQPIGTAAQTESKDYKE) form a disordered region. The Cytoplasmic segment spans residues 1 to 55 (MEGKEEDVNVGANKFPERQPIGTAAQTESKDYKEPPPAPFFEPGELKSWSFYRAG). Residues 56–76 (IAEFIATFLFLYVTVLTVMGV) traverse the membrane as a helical segment. Topologically, residues 77-92 (KRAPNMCASVGIQGIA) are extracellular. The helical transmembrane segment at 93-113 (WAFGGMIFALVYCTAGISGGH) threads the bilayer. Residues 114–133 (INPAVTFGLFLARKLSLTRA) are Cytoplasmic-facing. Residues 115 to 117 (NPA) carry the NPA 1 motif. The chain crosses the membrane as a helical span at residues 134–154 (LFYIVMQCLGAICGAGVVKGF). The Extracellular portion of the chain corresponds to 155-175 (QPGLYQTNGGGANVVAHGYTK). A helical transmembrane segment spans residues 176 to 196 (GSGLGAEIVGTFVLVYTVFSA). The Cytoplasmic segment spans residues 197–209 (TDAKRSARDSHVP). A helical membrane pass occupies residues 210 to 230 (ILAPLPIGFAVFLVHLATIPI). Residues 231-257 (TGTGINPARSLGAAIIYNKDHAWDDHW) are Extracellular-facing. Residues 236-238 (NPA) carry the NPA 2 motif. Residues 258–278 (IFWVGPFIGAALAALYHQIVI) traverse the membrane as a helical segment. Residues 279-287 (RAIPFKSKT) lie on the Cytoplasmic side of the membrane. Serine 285 is modified (phosphoserine).

Belongs to the MIP/aquaporin (TC 1.A.8) family. PIP (TC 1.A.8.11) subfamily. In terms of tissue distribution, predominantly expressed in green siliques. Also expressed above ground, in roots and flower buds.

It is found in the cell membrane. In terms of biological role, aquaporins facilitate the transport of water and small neutral solutes across cell membranes. This chain is Probable aquaporin PIP1-5 (PIP1-5), found in Arabidopsis thaliana (Mouse-ear cress).